Consider the following 307-residue polypeptide: tRNA dimethylallyltransferase 2 (307 aa).

11–18 (GPTASGKT) contacts ATP. 13-18 (TASGKT) is a binding site for substrate. Positions 36-39 (DSRQ) are interaction with substrate tRNA.

This sequence belongs to the IPP transferase family. Monomer. Requires Mg(2+) as cofactor.

It carries out the reaction adenosine(37) in tRNA + dimethylallyl diphosphate = N(6)-dimethylallyladenosine(37) in tRNA + diphosphate. Functionally, catalyzes the transfer of a dimethylallyl group onto the adenine at position 37 in tRNAs that read codons beginning with uridine, leading to the formation of N6-(dimethylallyl)adenosine (i(6)A). This is tRNA dimethylallyltransferase 2 from Phocaeicola vulgatus (strain ATCC 8482 / DSM 1447 / JCM 5826 / CCUG 4940 / NBRC 14291 / NCTC 11154) (Bacteroides vulgatus).